A 1393-amino-acid chain; its full sequence is DNA-directed RNA polymerase subunit beta' (1393 aa).

Zn(2+)-binding residues include C70, C72, C85, and C88. D461, D463, and D465 together coordinate Mg(2+). Residues C815, C889, C896, and C899 each coordinate Zn(2+).

It belongs to the RNA polymerase beta' chain family. The RNAP catalytic core consists of 2 alpha, 1 beta, 1 beta' and 1 omega subunit. When a sigma factor is associated with the core the holoenzyme is formed, which can initiate transcription. The cofactor is Mg(2+). It depends on Zn(2+) as a cofactor.

The enzyme catalyses RNA(n) + a ribonucleoside 5'-triphosphate = RNA(n+1) + diphosphate. Functionally, DNA-dependent RNA polymerase catalyzes the transcription of DNA into RNA using the four ribonucleoside triphosphates as substrates. The chain is DNA-directed RNA polymerase subunit beta' from Vesicomyosocius okutanii subsp. Calyptogena okutanii (strain HA).